Reading from the N-terminus, the 754-residue chain is Nibrin (754 aa).

An FHA domain is found at 24-83 (YVVGRKNCAILIENDQSISRNHAVLTANFSVTNLSQTDEIPVLTLKDNSKYGTFVNEEKM). 2 consecutive BRCT domains span residues 105–181 (KFRI…TEFL) and 224–315 (GKTF…LAVI). The mediates interaction with SP100 stretch occupies residues 111–328 (EPLVACSSCL…TKNYCDPQGH (218 aa)). The interval 221–402 (IFKGKTFIFL…FRMLSQDAPT (182 aa)) is interaction with MTOR, MAPKAP1 and RICTOR. Phosphoserine; by ATM is present on Ser-278. A disordered region spans residues 326-346 (QGHPSTGLKTTTPGPSLSQGV). The span at 328 to 346 (HPSTGLKTTTPGPSLSQGV) shows a compositional bias: polar residues. Thr-337 is subject to Phosphothreonine. A Phosphoserine; by ATM modification is found at Ser-343. At Ser-347 the chain carries Phosphoserine. Residue Lys-388 is modified to N6-lactoyllysine. 2 disordered regions span residues 396–415 (LSQDAPTVKESCKTSSNNNS) and 430–478 (QLSP…MSSC). The residue at position 397 (Ser-397) is a Phosphoserine. Thr-402 carries the post-translational modification Phosphothreonine. Composition is skewed to polar residues over residues 430–440 (QLSPTKLPSIN) and 447–462 (SQQQQTNSIRNYFQPS). A Phosphoserine; by CDK2 modification is found at Ser-432. Lys-435 is covalently cross-linked (Glycyl lysine isopeptide (Lys-Gly) (interchain with G-Cter in ubiquitin)). Positions 461 to 467 (PSTKKRE) match the Nuclear localization signal motif. Ser-509 and Ser-518 each carry phosphoserine. Glycyl lysine isopeptide (Lys-Gly) (interchain with G-Cter in SUMO2) cross-links involve residues Lys-529, Lys-571, and Lys-582. A phosphoserine mark is found at Ser-615 and Ser-673. Residues Lys-686, Lys-690, and Lys-735 each participate in a glycyl lysine isopeptide (Lys-Gly) (interchain with G-Cter in ubiquitin) cross-link. The FxF/Y motif signature appears at 740–749 (ADDLFRYNPY).

The protein belongs to the Nibrin family. As to quaternary structure, component of the MRN complex composed of two heterodimers RAD50 and MRE11 associated with a single NBN. The MRN complexes dimerize on DNA to form joined MRN-MRN oligomers required for DNA double-strand break repair. As part of the MRN complex, interacts with MCM9; the interaction recruits the complex to DNA repair sites. Component of the BASC complex, at least composed of BRCA1, MSH2, MSH6, MLH1, ATM, BLM, RAD50, MRE11 and NBN. Interacts with histone H2AX; this requires phosphorylation of H2AX on 'Ser-139' and promotes NBN recruitment to DNA damage sites. Interacts with (phosphorylated) MDC1; promoting NBN recruitment to DNA damage sites. Interacts with (phosphorylated) RAD17; promoting NBN recruitment to DNA damage sites. Interacts (via FxF/Y motif) with ATM. Interacts with HJURP. Interacts with INTS3. Interacts with KPNA2. Interacts with TERF2; interaction is disrupted upon NBN phosphorylation by CDK2. Interacts with (phosphorylated) RBBP8/CtIP; the interaction links the role of the MRN complex in DNA double-strand break sensing to resection. Interacts with SP100; recruits NBN to PML bodies. Interacts with ATF2. Interacts with MTOR, MAPKAP1 isoform 2 and RICTOR; indicative for an association with the mTORC2 complex. Interacts with MRNIP. Interacts with UFL1; promoting UFL1 recruitment to double-strand breaks following DNA damage. Interacts with CYREN (via XLF motif). (Microbial infection) Interacts with herpes simplex virus 1 protein UL12. Post-translationally, phosphorylated by ATM in response of ionizing radiation, and such phosphorylation is responsible intra-S phase checkpoint control and telomere maintenance. Phosphorylated at Ser-432 by CDK2 in S/G2 phases abolishes interaction with TERF2, enabling DCLRE1B/Apollo recruitment to telomeres. Phosphorylation at Ser-432 in response to dysfunctional telomeres promotes non-homologous end joining repair at telomeres, while dephosphorylation by PPP1CA promotes microhomology-mediated end-joining (MMEJ) repair. In terms of processing, ubiquitinated at Lys-435 via 'Lys-6'-linked ubiquitin chains by RNF8, promoting NBN recruitment to DNA double-strand breaks (DSBs). Ubiquitinated at Lys-686 and Lys-689 via 'Lys-63'-linked ubiquitin chains by PELI1: ubiquitination takes place following PELI1 phosphorylation and promotes ATM activation and DNA repair. Ubiquitinated at Lys-735 via 'Lys-63'-linked ubiquitin chains by the SCF(SKP2) complex: ubiquitination takes place following SKP2 phosphorylation and promotes ATM activation and DNA repair. Lactylation at Lys-388 by KAT5 in response to DNA damage promotes recruitment of the MRN complex to DNA damage sites. Delactylated by HDAC3. In terms of tissue distribution, ubiquitous. Expressed at high levels in testis.

The protein resides in the nucleus. It localises to the chromosome. Its subcellular location is the PML body. It is found in the telomere. Component of the MRN complex, which plays a central role in double-strand break (DSB) repair, DNA recombination, maintenance of telomere integrity and meiosis. The MRN complex is involved in the repair of DNA double-strand breaks (DSBs) via homologous recombination (HR), an error-free mechanism which primarily occurs during S and G2 phases. The complex (1) mediates the end resection of damaged DNA, which generates proper single-stranded DNA, a key initial steps in HR, and is (2) required for the recruitment of other repair factors and efficient activation of ATM and ATR upon DNA damage. The MRN complex possesses single-strand endonuclease activity and double-strand-specific 3'-5' exonuclease activity, which are provided by MRE11, to initiate end resection, which is required for single-strand invasion and recombination. Within the MRN complex, NBN acts as a protein-protein adapter, which specifically recognizes and binds phosphorylated proteins, promoting their recruitment to DNA damage sites. Recruits MRE11 and RAD50 components of the MRN complex to DSBs in response to DNA damage. Promotes the recruitment of PI3/PI4-kinase family members ATM, ATR, and probably DNA-PKcs to the DNA damage sites, activating their functions. Mediates the recruitment of phosphorylated RBBP8/CtIP to DSBs, leading to cooperation between the MRN complex and RBBP8/CtIP to initiate end resection. RBBP8/CtIP specifically promotes the endonuclease activity of the MRN complex to clear DNA ends containing protein adducts. The MRN complex is also required for the processing of R-loops. NBN also functions in telomere length maintenance via its interaction with TERF2: interaction with TERF2 during G1 phase preventing recruitment of DCLRE1B/Apollo to telomeres. NBN also promotes DNA repair choice at dysfunctional telomeres: NBN phosphorylation by CDK2 promotes non-homologous end joining repair at telomeres, while unphosphorylated NBN promotes microhomology-mediated end-joining (MMEJ) repair. Enhances AKT1 phosphorylation possibly by association with the mTORC2 complex. The chain is Nibrin from Homo sapiens (Human).